We begin with the raw amino-acid sequence, 319 residues long: Serine acetyltransferase, plasmid (319 aa).

The protein belongs to the transferase hexapeptide repeat family.

Its subcellular location is the cytoplasm. It catalyses the reaction L-serine + acetyl-CoA = O-acetyl-L-serine + CoA. The protein operates within amino-acid biosynthesis; L-cysteine biosynthesis; L-cysteine from L-serine: step 1/2. The protein is Serine acetyltransferase, plasmid (srpH) of Synechococcus elongatus (strain ATCC 33912 / PCC 7942 / FACHB-805) (Anacystis nidulans R2).